Reading from the N-terminus, the 57-residue chain is MAKAKGNREKIKLVSSANTGHFYTTEKNKRNMPEKMEIKKFDPVIRQHVMYKEAKIK.

Belongs to the bacterial ribosomal protein bL33 family.

The chain is Large ribosomal subunit protein bL33 from Shewanella pealeana (strain ATCC 700345 / ANG-SQ1).